The following is a 714-amino-acid chain: Fatty acid oxidation complex subunit alpha (714 aa).

Residues methionine 1–proline 190 form an enoyl-CoA hydratase region. The tract at residues alanine 306 to glutamine 714 is 3-hydroxyacyl-CoA dehydrogenase.

In the N-terminal section; belongs to the enoyl-CoA hydratase/isomerase family. This sequence in the central section; belongs to the 3-hydroxyacyl-CoA dehydrogenase family. Heterotetramer of two alpha chains (FadJ) and two beta chains (FadI).

Its subcellular location is the cytoplasm. The enzyme catalyses a (3S)-3-hydroxyacyl-CoA = a (2E)-enoyl-CoA + H2O. It carries out the reaction a 4-saturated-(3S)-3-hydroxyacyl-CoA = a (3E)-enoyl-CoA + H2O. The catalysed reaction is a (3S)-3-hydroxyacyl-CoA + NAD(+) = a 3-oxoacyl-CoA + NADH + H(+). It catalyses the reaction (3S)-3-hydroxybutanoyl-CoA = (3R)-3-hydroxybutanoyl-CoA. Its pathway is lipid metabolism; fatty acid beta-oxidation. Its function is as follows. Catalyzes the formation of a hydroxyacyl-CoA by addition of water on enoyl-CoA. Also exhibits 3-hydroxyacyl-CoA epimerase and 3-hydroxyacyl-CoA dehydrogenase activities. This chain is Fatty acid oxidation complex subunit alpha, found in Escherichia coli (strain UTI89 / UPEC).